We begin with the raw amino-acid sequence, 722 residues long: Polyribonucleotide nucleotidyltransferase (722 aa).

2 residues coordinate Mg(2+): aspartate 495 and aspartate 501. In terms of domain architecture, KH spans 561-620; sequence PRLYVMKINPEKIREVIGKGGETIRSITKDTGCEINIEEDGTITIASVSSEGAEAAKKRI. The region spanning 630–700 is the S1 motif domain; it reads GKVYEGTVVK…DRGRIRLSIK (71 aa).

It belongs to the polyribonucleotide nucleotidyltransferase family. The cofactor is Mg(2+).

It is found in the cytoplasm. It catalyses the reaction RNA(n+1) + phosphate = RNA(n) + a ribonucleoside 5'-diphosphate. Its function is as follows. Involved in mRNA degradation. Catalyzes the phosphorolysis of single-stranded polyribonucleotides processively in the 3'- to 5'-direction. The polypeptide is Polyribonucleotide nucleotidyltransferase (Chromobacterium violaceum (strain ATCC 12472 / DSM 30191 / JCM 1249 / CCUG 213 / NBRC 12614 / NCIMB 9131 / NCTC 9757 / MK)).